The following is a 209-amino-acid chain: Mitotic spindle checkpoint protein MAD2 (209 aa).

One can recognise an HORMA domain in the interval His15–Val198.

Belongs to the MAD2 family. In terms of assembly, part of the mitotic checkpoint complex (MCC); interacts with MAD1, CDC20-1, CDC20-2 and CDC20-5. Interacts with BUBR1 at chromocenters and with BUB3.1. Interacts with EIF4B3. In terms of tissue distribution, expressed in actively dividing tissues, early in organ development, in young leaves, lateral root primordia and root meristems.

The protein localises to the nucleus. Its subcellular location is the nucleus envelope. The protein resides in the chromosome. It localises to the centromere. It is found in the kinetochore. The protein localises to the cytoplasm. Its subcellular location is the cytoskeleton. The protein resides in the spindle. Functionally, required for the execution of the mitotic checkpoint which monitors the process of kinetochore-spindle attachment and delays the onset of anaphase when this process is not complete. It inhibits the activity of the anaphase promoting complex by sequestering CDC20 until all chromosomes are aligned at the metaphase plate. In Arabidopsis thaliana (Mouse-ear cress), this protein is Mitotic spindle checkpoint protein MAD2.